Reading from the N-terminus, the 213-residue chain is Large ribosomal subunit protein uL3 (213 aa).

An N5-methylglutamine modification is found at Gln-151.

Belongs to the universal ribosomal protein uL3 family. In terms of assembly, part of the 50S ribosomal subunit. Forms a cluster with proteins L14 and L19. In terms of processing, methylated by PrmB.

Its function is as follows. One of the primary rRNA binding proteins, it binds directly near the 3'-end of the 23S rRNA, where it nucleates assembly of the 50S subunit. In Allorhizobium ampelinum (strain ATCC BAA-846 / DSM 112012 / S4) (Agrobacterium vitis (strain S4)), this protein is Large ribosomal subunit protein uL3.